We begin with the raw amino-acid sequence, 351 residues long: Divinyl chlorophyll a/b light-harvesting protein PcbC (351 aa).

6 helical membrane passes run 27-47, 64-84, 89-109, 203-223, 244-264, and 306-326; these read FIAAHAAHAGLMMFWAGAFTL, LICLPHLAGLGIGGVSNGVIT, CTVIAVLHLIFSGVLGAGGLL, VMGGHAFLAFFLIIGGAFHIA, VLSYSLAGVAYCAFVAAFWCA, and LSNVHFYLGFFFLQGHLWHAL.

Belongs to the PsbB/PsbC family. IsiA/Pcb subfamily. The antenna complex consists of divinyl chlorophylls (a and b) and divinyl chlorophyll a/b binding proteins and binds more divinyl chlorophyll b than does the antenna complex from high-light-adapted Prochlorococcus. It depends on divinyl chlorophyll a as a cofactor. Divinyl chlorophyll b is required as a cofactor.

It is found in the cellular thylakoid membrane. The antenna complex functions as a light receptor, it captures and delivers excitation energy to photosystems II and I. The Prochlorales pcb genes are not related to higher plant LHCs. The protein is Divinyl chlorophyll a/b light-harvesting protein PcbC (pcbC) of Prochlorococcus marinus (strain SARG / CCMP1375 / SS120).